A 311-amino-acid chain; its full sequence is Solute carrier family 25 member 36 (311 aa).

Solcar repeat units lie at residues 4–108 (RDTL…CKEK), 116–203 (DSTQ…IKQK), and 224–308 (SDFV…VVYL). 6 helical membrane-spanning segments follow: residues 7-27 (LVHL…TCPL), 41-57 (LYIS…ASVN), 111-131 (GVFD…AGFT), 180-200 (MSAS…YESI), 226-246 (FVRM…IAYP), and 291-311 (QIPN…LLNG).

Belongs to the mitochondrial carrier (TC 2.A.29) family.

The protein localises to the mitochondrion inner membrane. It catalyses the reaction UTP(in) + CTP(out) = UTP(out) + CTP(in). The catalysed reaction is CTP(out) + UDP(in) = CTP(in) + UDP(out). The enzyme catalyses UMP(in) + CTP(out) = UMP(out) + CTP(in). It carries out the reaction dUTP(in) + CTP(out) = dUTP(out) + CTP(in). It catalyses the reaction dUMP(in) + CTP(out) = dUMP(out) + CTP(in). The catalysed reaction is CDP(in) + CTP(out) = CDP(out) + CTP(in). The enzyme catalyses CTP(out) + CMP(in) = CTP(in) + CMP(out). It carries out the reaction dCTP(in) + CTP(out) = dCTP(out) + CTP(in). It catalyses the reaction dCDP(in) + CTP(out) = dCDP(out) + CTP(in). The catalysed reaction is dCMP(in) + CTP(out) = dCMP(out) + CTP(in). The enzyme catalyses GTP(in) + CTP(out) = GTP(out) + CTP(in). It carries out the reaction CTP(out) + GDP(in) = CTP(in) + GDP(out). It catalyses the reaction GMP(in) + CTP(out) = GMP(out) + CTP(in). The catalysed reaction is dGTP(in) + CTP(out) = dGTP(out) + CTP(in). The enzyme catalyses dGMP(in) + CTP(out) = dGMP(out) + CTP(in). It carries out the reaction ITP(in) + CTP(out) = ITP(out) + CTP(in). It catalyses the reaction IDP(in) + CTP(out) = IDP(out) + CTP(in). The catalysed reaction is IMP(in) + CTP(out) = IMP(out) + CTP(in). The enzyme catalyses CTP(out) = CTP(in). Mitochondrial transporter that imports/exports pyrimidine nucleotides into and from mitochondria. Selectively transports cytosine, guanosine, inosine and uridine (deoxy)nucleoside mono-, di-, and triphosphates by antiport mechanism. Catalyzes uniport at much lower rate. May import (deoxy)nucleoside triphosphates in exchange for intramitochondrial (deoxy)nucleoside mono- and diphosphates, thus providing precursors necessary for de novo synthesis of mitochondrial DNA and RNA while exporting products of their catabolism. Participates in mitochondrial genome maintenance, regulation of mitochondrial membrane potential and mitochondrial respiration. This chain is Solute carrier family 25 member 36 (Slc25a36), found in Mus musculus (Mouse).